The primary structure comprises 255 residues: Small ribosomal subunit protein uS2 (255 aa).

The segment at 231 to 255 (RLQTGAEEEFSTEGEEVVEETPAEA) is disordered. Over residues 236–255 (AEEEFSTEGEEVVEETPAEA) the composition is skewed to acidic residues.

It belongs to the universal ribosomal protein uS2 family.

This Geobacter sp. (strain M21) protein is Small ribosomal subunit protein uS2.